Reading from the N-terminus, the 574-residue chain is Serine carboxypeptidase ctsa-3.1 (574 aa).

The signal sequence occupies residues M1–G19. N-linked (GlcNAc...) asparagine glycans are attached at residues N48 and N163. Residue S172 is part of the active site. N-linked (GlcNAc...) asparagine glycans are attached at residues N241, N408, N414, and N426. Residues D441 and H507 contribute to the active site. N-linked (GlcNAc...) asparagine glycosylation occurs at N534.

It belongs to the peptidase S10 family.

In Caenorhabditis elegans, this protein is Serine carboxypeptidase ctsa-3.1.